The following is a 212-amino-acid chain: MTFVIAIDGPAAAGKGTLSRRIAEQYGFHHLDTGLTYRATAKALMDAGLPLDDEAVAEKTAREVDLSGLDRAVLSEHSIGEAASKIAVMPAVRRALVEAQRAFARKEPGTVLDGRDIGTVVCPDAAVKLYVTASPEVRAKRRHDEIVAGGGKADYTAIFEDVKKRDGRDMGRADSPLRPAEDAHLLDTSEMSIEAAFQAAKTLVDAALKEKI.

ATP is bound at residue 9–17 (GPAAAGKGT).

Belongs to the cytidylate kinase family. Type 1 subfamily.

It localises to the cytoplasm. The enzyme catalyses CMP + ATP = CDP + ADP. It carries out the reaction dCMP + ATP = dCDP + ADP. This chain is Cytidylate kinase, found in Rhizobium meliloti (strain 1021) (Ensifer meliloti).